A 471-amino-acid chain; its full sequence is MMVFSSTFIFLILELVVLCEASVHTIQIKDKHFVDTVTGKPFFIKGVDYQPGGSSDVSEKQDPLSNPDACARDILLFQELGINTVRIYSINPDLNHDACMTMLAMAGIYLILDVNSPLQNQHLNRYEPWTTYNEVYLEHVFKVVEQFSHYNNTLGFFAGNEIVNDKRSAQYSPAYVKELIGTMKNYISAHSPRTIPVGYSAADDLNYRVSLSEYLECKDDDKPENSVDFYGVNSYQWCGQQTMQTSGYDTLVDAYRSYSKPVFFSEFGCNKVLPRQFQEIGYLFSEEMYSVFCGGLVYEFSQEDNNYGLVEYQEDDSVQLLADFEKLKSHYQNIEFPSMKTLKETVQMEETPSCAEDYENLKIESKIAKNLGSSLIKKGVKVEKGKYIDIHEDQLSTNVTILDKHGDRWNGPKKIEIRQSLTLADLEGEEQEDADEDKDDLKRKHRNSASISGPLLPLGLCLLFFTFSLFF.

The signal sequence occupies residues methionine 1–alanine 21. A disulfide bridge links cysteine 70 with cysteine 99. (1,3-beta-D-glucosyl)n is bound at residue tyrosine 88. N-linked (GlcNAc...) asparagine glycosylation is present at asparagine 151. (1,3-beta-D-glucosyl)n-binding residues include asparagine 160, glutamate 161, aspartate 203, and arginine 208. The active-site Proton donor is glutamate 161. 2 cysteine pairs are disulfide-bonded: cysteine 217/cysteine 354 and cysteine 238/cysteine 269. The active-site Nucleophile is the glutamate 266. Position 298 (tyrosine 298) interacts with (1,3-beta-D-glucosyl)n. Asparagine 398 is a glycosylation site (N-linked (GlcNAc...) asparagine). The GPI-anchor amidated asparagine moiety is linked to residue asparagine 447. Positions serine 448–phenylalanine 471 are cleaved as a propeptide — removed in mature form.

Belongs to the glycosyl hydrolase 72 family.

It localises to the cell membrane. Splits internally a 1,3-beta-glucan molecule and transfers the newly generated reducing end (the donor) to the non-reducing end of another 1,3-beta-glucan molecule (the acceptor) forming a 1,3-beta linkage, resulting in the elongation of 1,3-beta-glucan chains in the cell wall. Involved in spore wall assembly. This Saccharomyces cerevisiae (strain ATCC 204508 / S288c) (Baker's yeast) protein is 1,3-beta-glucanosyltransferase GAS4 (GAS4).